The following is a 256-amino-acid chain: MDTYSVFTTKWKQLTGVDLTLYKEAQMKRRLTSLYEKKGFQSFKDFAAALEKDQALLNETLDRMTINVSEFYRNYKRWEVLETAILPLIKTSRPLKIWSAACSTGEEPYTLAMLLDQQKGLPGYQILATDIDEKALEKAKKGVYQERSLQEVPLSVKDRYFTQNANRSYEVKTEIKKNITFKKHNLLADRYEQDFDLIVCRNVFIYFTESAKEELYLKMAHSLKKNGVLFVGSTEQIFNPEKFGLVPADTFFYQKR.

Positions 1–256 constitute a CheR-type methyltransferase domain; sequence MDTYSVFTTK…PADTFFYQKR (256 aa). Residues Asn67, Ser69, Arg73, Glu107, Asp130, 185 to 186, and 201 to 202 contribute to the S-adenosyl-L-methionine site; these read NL and RN.

In terms of assembly, monomer.

It catalyses the reaction L-glutamyl-[protein] + S-adenosyl-L-methionine = [protein]-L-glutamate 5-O-methyl ester + S-adenosyl-L-homocysteine. Its function is as follows. Methylation of the membrane-bound methyl-accepting chemotaxis proteins (MCP) to form gamma-glutamyl methyl ester residues in MCP. CheR is responsible for the chemotactic adaptation to repellents. This Bacillus subtilis (strain 168) protein is Chemotaxis protein methyltransferase (cheR).